Reading from the N-terminus, the 610-residue chain is Elongation factor 4 (610 aa).

The tr-type G domain occupies E11–T193. Residues D23–T28 and N140–D143 contribute to the GTP site.

It belongs to the TRAFAC class translation factor GTPase superfamily. Classic translation factor GTPase family. LepA subfamily.

The protein resides in the cell membrane. It catalyses the reaction GTP + H2O = GDP + phosphate + H(+). Required for accurate and efficient protein synthesis under certain stress conditions. May act as a fidelity factor of the translation reaction, by catalyzing a one-codon backward translocation of tRNAs on improperly translocated ribosomes. Back-translocation proceeds from a post-translocation (POST) complex to a pre-translocation (PRE) complex, thus giving elongation factor G a second chance to translocate the tRNAs correctly. Binds to ribosomes in a GTP-dependent manner. The sequence is that of Elongation factor 4 from Streptococcus pyogenes serotype M49 (strain NZ131).